The chain runs to 175 residues: Inorganic pyrophosphatase (175 aa).

Positions 30, 44, and 56 each coordinate substrate. Mg(2+) contacts are provided by Asp66, Asp71, and Asp103. Residue Tyr140 coordinates substrate.

This sequence belongs to the PPase family. Homohexamer. The cofactor is Mg(2+).

The protein localises to the cytoplasm. It catalyses the reaction diphosphate + H2O = 2 phosphate + H(+). Its function is as follows. Catalyzes the hydrolysis of inorganic pyrophosphate (PPi) forming two phosphate ions. The sequence is that of Inorganic pyrophosphatase from Thermus thermophilus (strain ATCC 27634 / DSM 579 / HB8).